The primary structure comprises 315 residues: T cell receptor beta chain MC.7.G5 (315 aa).

The N-terminal stretch at 1–21 is a signal peptide; it reads MTIRLLCYMGFYFLGAGLMEA. An Ig-like V-type domain is found at 22–114; the sequence is DIYQTPRYLV…TSQYLCASSE (93 aa). Residues 22–114 form a t cell receptor beta variable 25-1 region; sequence DIYQTPRYLV…TSQYLCASSE (93 aa). Cysteines 42 and 110 form a disulfide. Residues 46–50 form a CDR1 region; that stretch reads MGHDK. Positions 68 to 73 are CDR2; that stretch reads SYGVNS. An N-linked (GlcNAc...) asparagine glycan is attached at Asn-72. The segment at 110–127 is CDR3; sequence CASSEARGLAEFTDTQYF. A t cell receptor beta joining 2-3 region spans residues 122–136; the sequence is TDTQYFGPGTRLTVL. Residues 138–315 form a t cell receptor beta constant 2 region; sequence DLKNVFPPEV…AMVKRKDSRG (178 aa). The Ig-like C1-type domain occupies 145–254; sequence PEVAVFEPSE…WTQDRAKPVT (110 aa). Cysteines 167 and 232 form a disulfide. N-linked (GlcNAc...) asparagine glycosylation occurs at Asn-206. A connecting peptide region spans residues 267–281; the sequence is CGFTSESYQQGVLSA. Residues 282-304 form a helical membrane-spanning segment; that stretch reads TILYEILLGKATLYAVLVSALVL. The Cytoplasmic segment spans residues 305-315; that stretch reads MAMVKRKDSRG.

Disulfide-linked heterodimer with TRAV38-2DV8*01J31*01C*01 alpha chain. The alpha-beta TR associates with the transmembrane signaling CD3 coreceptor proteins to form the TR-CD3 (TCR). The assembly of alpha-beta TR heterodimers with CD3 occurs in the endoplasmic reticulum where a single alpha-beta TR heterodimer associates with one CD3D-CD3E heterodimer, one CD3G-CD3E heterodimer and one CD247 homodimer forming a stable octameric structure. CD3D-CD3E and CD3G-CD3E heterodimers preferentially associate with TR alpha and TR beta chains (via TM domain), respectively. The association of the CD247 homodimer is the last step of TCR assembly in the endoplasmic reticulum and is required for transport to the cell surface. As to expression, expressed in MR1-restricted CD8-positive T cells.

Its subcellular location is the cell membrane. The beta chain of TRAV38-2DV8*01J31*01C*01/TRBV25-1*01J2S3*01C2*01 alpha-beta T cell receptor (TR) clonotype that displays pan-cancer cell recognition via the invariant MR1 molecule. On CD8-positive T cell clone MC.7.G5, likely recognizes tumor-specific or -associated metabolite(s) essential for cancer cell survival, triggering killing of many cancer cell types including lung, melanoma, leukemia, colon, breast, prostate, bone and ovarian cancer cells. Mediates cancer cell cytotoxicity in an HLA-independent manner. Has no reactivity to healthy cells even stressed or infected by bacteria. Antigen recognition initiates TR-CD3 clustering on the cell surface and intracellular activation of LCK that phosphorylates the ITAM motifs of CD3G, CD3D, CD3E and CD247 enabling the recruitment of ZAP70. In turn, ZAP70 phosphorylates LAT, which recruits numerous signaling molecules to form the LAT signalosome. The LAT signalosome propagates signal branching to three major signaling pathways, the calcium, the mitogen-activated protein kinase (MAPK) kinase and the nuclear factor NF-kappa-B (NF-kB) pathways, leading to the mobilization of transcription factors that are critical for gene expression and essential for T cell differentiation into effector/memory T cells. This is T cell receptor beta chain MC.7.G5 from Homo sapiens (Human).